The following is a 344-amino-acid chain: Probable dual-specificity RNA methyltransferase RlmN (344 aa).

Residue E90 is the Proton acceptor of the active site. A Radical SAM core domain is found at 96 to 326; the sequence is YKYGNAICIS…VTIRRELGSS (231 aa). A disulfide bridge links C103 with C331. Residues C110, C114, and C117 each contribute to the [4Fe-4S] cluster site. S-adenosyl-L-methionine-binding positions include 157–158, S189, 212–214, and N288; these read GE and SLH. The active-site S-methylcysteine intermediate is the C331.

Belongs to the radical SAM superfamily. RlmN family. [4Fe-4S] cluster serves as cofactor.

The protein localises to the cytoplasm. The enzyme catalyses adenosine(2503) in 23S rRNA + 2 reduced [2Fe-2S]-[ferredoxin] + 2 S-adenosyl-L-methionine = 2-methyladenosine(2503) in 23S rRNA + 5'-deoxyadenosine + L-methionine + 2 oxidized [2Fe-2S]-[ferredoxin] + S-adenosyl-L-homocysteine. It catalyses the reaction adenosine(37) in tRNA + 2 reduced [2Fe-2S]-[ferredoxin] + 2 S-adenosyl-L-methionine = 2-methyladenosine(37) in tRNA + 5'-deoxyadenosine + L-methionine + 2 oxidized [2Fe-2S]-[ferredoxin] + S-adenosyl-L-homocysteine. Specifically methylates position 2 of adenine 2503 in 23S rRNA and position 2 of adenine 37 in tRNAs. This is Probable dual-specificity RNA methyltransferase RlmN from Caldicellulosiruptor saccharolyticus (strain ATCC 43494 / DSM 8903 / Tp8T 6331).